The following is a 251-amino-acid chain: Triosephosphate isomerase (251 aa).

9-11 lines the substrate pocket; it reads NWK. Residue H96 is the Electrophile of the active site. E167 (proton acceptor) is an active-site residue. Residues G173, S213, and 234–235 contribute to the substrate site; that span reads GG.

The protein belongs to the triosephosphate isomerase family. Homodimer.

Its subcellular location is the cytoplasm. It carries out the reaction D-glyceraldehyde 3-phosphate = dihydroxyacetone phosphate. It participates in carbohydrate biosynthesis; gluconeogenesis. It functions in the pathway carbohydrate degradation; glycolysis; D-glyceraldehyde 3-phosphate from glycerone phosphate: step 1/1. Its function is as follows. Involved in the gluconeogenesis. Catalyzes stereospecifically the conversion of dihydroxyacetone phosphate (DHAP) to D-glyceraldehyde-3-phosphate (G3P). The sequence is that of Triosephosphate isomerase from Bacteroides fragilis (strain ATCC 25285 / DSM 2151 / CCUG 4856 / JCM 11019 / LMG 10263 / NCTC 9343 / Onslow / VPI 2553 / EN-2).